A 527-amino-acid chain; its full sequence is Putative BTB/POZ domain-containing protein R225 (527 aa).

The BTB domain maps to 16–89 (TDLELVLTDP…YGQTNRSTDY (74 aa)).

The protein belongs to the mimivirus BTB/WD family.

This Acanthamoeba polyphaga (Amoeba) protein is Putative BTB/POZ domain-containing protein R225.